We begin with the raw amino-acid sequence, 501 residues long: MQPVLELKGISKSFPGVKALSGAALRVYPGKVMALVGENGAGKSTMMKVLTGIYTRDTGTVHYLGKEVIFSGPRSSQEAGIGIIHQELNLIPQLTIAENIFLGREFVNKFGAIDWRKMYQEADRLLKKLNLSYSSHRLVAELSIGDQQMVEIAKVLSFKSKVIIMDEPTDALTDTETESLFRVIYELKSQRCGIVYISHRLREIFEICDDVTVFRDGQFIGEKSVKELKEETLIEMMVGRKLEDQYPRLNLPRGKKRLEVKQISGPGVTNASFSLYSGEILGISGLMGAGRTELMKIIYGALPKTQGQITLDGTPIVIRNPQDGLACGIVYISEDRKRDGLVLGMSIKDNMSLTALRYFSNRLGGLNHKEEQNAVSDFIKLFSIKTPSMGQVIGLLSGGNQQKVAIARGLMTRPKVLILDEPTRGVDVGAKKEIYQLINQFKKEGLSIILVSSEMPEVIGMSDRILVMCEGQISGEFFAEQATQEILMAAAVGKQYGAIQE.

ABC transporter domains lie at 5–241 (LELK…VGRK) and 249–495 (LNLP…VGKQ). Residue 37–44 (GENGAGKS) participates in ATP binding.

The protein belongs to the ABC transporter superfamily. Ribose importer (TC 3.A.1.2.1) family. The complex is composed of an ATP-binding protein (RbsA), two transmembrane proteins (RbsC) and a solute-binding protein (RbsB).

The protein resides in the cell inner membrane. It carries out the reaction D-ribose(out) + ATP + H2O = D-ribose(in) + ADP + phosphate + H(+). Functionally, part of the ABC transporter complex RbsABC involved in ribose import. Responsible for energy coupling to the transport system. This is Ribose import ATP-binding protein RbsA from Photorhabdus laumondii subsp. laumondii (strain DSM 15139 / CIP 105565 / TT01) (Photorhabdus luminescens subsp. laumondii).